The following is a 185-amino-acid chain: UPF0149 protein PFL_5969 (185 aa).

It belongs to the UPF0149 family.

The chain is UPF0149 protein PFL_5969 from Pseudomonas fluorescens (strain ATCC BAA-477 / NRRL B-23932 / Pf-5).